Here is a 286-residue protein sequence, read N- to C-terminus: Formyltetrahydrofolate deformylase (286 aa).

The region spanning Val8–Gln88 is the ACT domain. The active site involves Asp230.

The protein belongs to the PurU family.

It carries out the reaction (6R)-10-formyltetrahydrofolate + H2O = (6S)-5,6,7,8-tetrahydrofolate + formate + H(+). It participates in purine metabolism; IMP biosynthesis via de novo pathway; formate from 10-formyl-5,6,7,8-tetrahydrofolate: step 1/1. In terms of biological role, catalyzes the hydrolysis of 10-formyltetrahydrofolate (formyl-FH4) to formate and tetrahydrofolate (FH4). This is Formyltetrahydrofolate deformylase from Corynebacterium sp. (strain P-1).